The primary structure comprises 458 residues: Ammonium transporter Rh type B (458 aa).

Residues 1 to 13 (MAGSSRRAGGRRL) are Cytoplasmic-facing. Residues 14–34 (QLPLLCLLLQGATAILFAVFV) traverse the membrane as a helical segment. The Extracellular portion of the chain corresponds to 35 to 61 (RYNHETDAALWHWGNHSNPDNEFYFRY). N-linked (GlcNAc...) asparagine glycosylation is present at Asn-49. Residues 62–82 (PSFQDVHTMIFVGFGFLMAFL) traverse the membrane as a helical segment. The Cytoplasmic segment spans residues 83-86 (QRYG). The helical transmembrane segment at 87–107 (FSSVGFTFLLAAFALQWSTLV) threads the bilayer. The Extracellular segment spans residues 108–124 (QGFLHTFHGGHIHIGVE). Residues 125–145 (SMINADFCAGAVLISFGAILG) traverse the membrane as a helical segment. At 146-149 (KTGP) the chain is on the cytoplasmic side. Residues 150-170 (AQLLLMALLEVVLFGLNEFVL) form a helical membrane-spanning segment. Residues 171 to 178 (LSLLGVKD) are Extracellular-facing. The chain crosses the membrane as a helical span at residues 179–201 (AGGSMTIHTFGAYFGLVLSRVLY). At 202 to 219 (RPQLEKSKHRQSSVYHSD) the chain is on the cytoplasmic side. The helical transmembrane segment at 220-240 (LFAMIGTIFLWIFWPSFNSAP) threads the bilayer. The Extracellular segment spans residues 241 to 251 (TPLGDGQHRTA). Residues 252–272 (LNTYYSLTASTLSTFALSALV) traverse the membrane as a helical segment. Topologically, residues 273 to 282 (GRDGRLDMVH) are cytoplasmic. The helical transmembrane segment at 283 to 303 (VQNAALAGGVVVGTSAEMMLT) threads the bilayer. A topological domain (extracellular) is located at residue Pro-304. The chain crosses the membrane as a helical span at residues 305–325 (FGALAAGFLAGTVSTLGFKFF). The Cytoplasmic portion of the chain corresponds to 326 to 346 (TPILESKFKIQDTCGVHNLHG). A helical transmembrane segment spans residues 347–367 (MPGVLGALLGVLVAGLATHDS). The Extracellular segment spans residues 368–393 (YGEGLESVFPLIAEGQRSSTSQALHQ). Residues 394-414 (LFGLFVTLIFASVGGGLGGLL) traverse the membrane as a helical segment. The Cytoplasmic segment spans residues 415–458 (LRLPFLDSPPDSQCYEDQIYWEVPEEHADLAQGSLRPEEPDTQA). Positions 416-424 (RLPFLDSPP) are interaction with ANK3. Residues 429–432 (YEDQ) carry the Basolateral sorting signal motif.

It belongs to the ammonium transporter (TC 2.A.49) family. Rh subfamily. As to quaternary structure, interacts (via C-terminus) with ANK2 and ANK3; required for targeting to the basolateral membrane. In terms of processing, N-glycosylated.

It is found in the cell membrane. Its subcellular location is the basolateral cell membrane. It catalyses the reaction NH4(+)(in) = NH4(+)(out). The enzyme catalyses methylamine(out) = methylamine(in). It carries out the reaction CO2(out) = CO2(in). In terms of biological role, ammonium transporter involved in the maintenance of acid-base homeostasis. Transports ammonium and its related derivative methylammonium across the basolateral plasma membrane of epithelial cells likely contributing to renal transepithelial ammonia transport and ammonia metabolism. May transport either NH4(+) or NH3 ammonia species predominantly mediating an electrogenic NH4(+) transport. May act as a CO2 channel providing for renal acid secretion. This chain is Ammonium transporter Rh type B (RHBG), found in Sus scrofa (Pig).